We begin with the raw amino-acid sequence, 66 residues long: Large ribosomal subunit protein bL32 (66 aa).

This sequence belongs to the bacterial ribosomal protein bL32 family.

This Rickettsia canadensis (strain McKiel) protein is Large ribosomal subunit protein bL32.